Here is an 85-residue protein sequence, read N- to C-terminus: Small ribosomal subunit protein uS17 (85 aa).

This sequence belongs to the universal ribosomal protein uS17 family. As to quaternary structure, part of the 30S ribosomal subunit.

One of the primary rRNA binding proteins, it binds specifically to the 5'-end of 16S ribosomal RNA. The protein is Small ribosomal subunit protein uS17 of Mycoplasma capricolum subsp. capricolum (strain California kid / ATCC 27343 / NCTC 10154).